Reading from the N-terminus, the 26-residue chain is GLWNKIKEAASKAAGKAALGFVNEMV.

Valine amide is present on V26.

Belongs to the frog skin active peptide (FSAP) family. Dermaseptin subfamily. As to expression, expressed by the skin glands.

It localises to the secreted. In terms of biological role, possesses a potent antimicrobial activity against Gram-positive and Gram-negative bacteria. Probably acts by disturbing membrane functions with its amphipathic structure. The chain is Dermaseptin-B5 from Phyllomedusa bicolor (Two-colored leaf frog).